The following is a 505-amino-acid chain: OVARIAN TUMOR DOMAIN-containing deubiquitinating enzyme 6 (505 aa).

The segment at 1 to 191 is disordered; sequence MTRILVQRGS…NSSDEHMPCY (191 aa). Residues 9-30 are compositionally biased toward low complexity; sequence GSSGSSSNSSRPSSSSSSSSGS. A compositionally biased stretch (basic and acidic residues) spans 51-72; the sequence is DEKQEEVTVVEKAECSDAKDVA. The span at 73–86 shows a compositional bias: acidic residues; the sequence is VDSDEPADREDDEG. The span at 115–124 shows a compositional bias: pro residues; that stretch reads PPVPAPPPKP. Low complexity predominate over residues 159 to 173; sequence SSRSSPTGSHPSSPR. Residues 174–188 show a composition bias toward basic and acidic residues; sequence SHSENEGYNSSDEHM. The OTU domain maps to 216–339; it reads FEIRRMLEDG…GNHYNSLVDP (124 aa). Residue D224 is part of the active site. Residue C227 is the Nucleophile of the active site. The active site involves H332. A disordered region spans residues 416–447; the sequence is RIGPKESSTSNAETSSSGARPSGSDSKPAEAV. Low complexity predominate over residues 421–441; sequence ESSTSNAETSSSGARPSGSDS. The region spanning 446-491 is the UBA domain; it reads AVKEKTVLSSSIEMVLSMGFSYAQAMEAYSIFGDDVDSMVCYVLET.

Belongs to the peptidase C85 family. As to quaternary structure, interacts with KDM1C. Mostly expressed in stems flowers and siliques, and, to a lower extent, in leaves, roots and seedlings.

Its subcellular location is the nucleus. It is found in the cytoplasm. It carries out the reaction Thiol-dependent hydrolysis of ester, thioester, amide, peptide and isopeptide bonds formed by the C-terminal Gly of ubiquitin (a 76-residue protein attached to proteins as an intracellular targeting signal).. In terms of biological role, hydrolase that can remove conjugated ubiquitin from proteins in vitro and may therefore play an important regulatory role at the level of protein turnover by preventing degradation. Binds chromatin (e.g. nucleosomes and histones) and has enzymatic histone deubiquitinase activity, specific for the H2B histone. Can both repress (e.g. OSR2) and promote (e.g. AN3) the expression of target genes by associating with chromatin, deubiquitinating H2B and regulating its euchromatic histone marks (e.g. H3ac and H3K4me). In association with LDL1/KDM1C, involved in transcriptional gene repression via histone deubiquitination and demethylation. Promotes the concerted epigenetic regulation and repression (e.g. the removal of euchromatic histone acetylation, ubiquitination, and methylation marks) of a set of genes (e.g. GA20OX, WUS, OSR2, ARL and ABI5) that collectively limit plant growth thus stimulating plant growth and increasing cell size. The polypeptide is OVARIAN TUMOR DOMAIN-containing deubiquitinating enzyme 6 (Arabidopsis thaliana (Mouse-ear cress)).